We begin with the raw amino-acid sequence, 349 residues long: Ion-translocating oxidoreductase complex subunit D (349 aa).

3 helical membrane-spanning segments follow: residues 37 to 57 (AFFG…ALSA), 73 to 90 (LSDN…VAIP), and 124 to 144 (AMAA…TWIA). Thr-185 carries the post-translational modification FMN phosphoryl threonine. Transmembrane regions (helical) follow at residues 212–232 (ATGV…LVLL), 239–259 (WHIS…GFLL), 265–285 (GSPL…FIAT), 291–311 (ATSP…VYII), and 315–335 (GGYP…APFI).

This sequence belongs to the NqrB/RnfD family. In terms of assembly, the complex is composed of six subunits: RnfA, RnfB, RnfC, RnfD, RnfE and RnfG. It depends on FMN as a cofactor.

Its subcellular location is the cell inner membrane. In terms of biological role, part of a membrane-bound complex that couples electron transfer with translocation of ions across the membrane. This is Ion-translocating oxidoreductase complex subunit D from Shewanella sp. (strain W3-18-1).